A 246-amino-acid polypeptide reads, in one-letter code: Probable transcriptional regulatory protein ESA_01378 (246 aa).

Belongs to the TACO1 family.

It is found in the cytoplasm. This Cronobacter sakazakii (strain ATCC BAA-894) (Enterobacter sakazakii) protein is Probable transcriptional regulatory protein ESA_01378.